We begin with the raw amino-acid sequence, 327 residues long: tRNA-dihydrouridine(20/20a) synthase (327 aa).

Residues Pro17–Leu19 and Gln69 contribute to the FMN site. Cys99 serves as the catalytic Proton donor. Residues Lys138, His170, Asn210 to Gly212, and Gly232 to Arg233 contribute to the FMN site.

Belongs to the Dus family. DusA subfamily. Requires FMN as cofactor.

The enzyme catalyses 5,6-dihydrouridine(20) in tRNA + NADP(+) = uridine(20) in tRNA + NADPH + H(+). It carries out the reaction 5,6-dihydrouridine(20) in tRNA + NAD(+) = uridine(20) in tRNA + NADH + H(+). The catalysed reaction is 5,6-dihydrouridine(20a) in tRNA + NADP(+) = uridine(20a) in tRNA + NADPH + H(+). It catalyses the reaction 5,6-dihydrouridine(20a) in tRNA + NAD(+) = uridine(20a) in tRNA + NADH + H(+). In terms of biological role, catalyzes the synthesis of 5,6-dihydrouridine (D), a modified base found in the D-loop of most tRNAs, via the reduction of the C5-C6 double bond in target uridines. Specifically modifies U20 and U20a in tRNAs. The chain is tRNA-dihydrouridine(20/20a) synthase from Pasteurella multocida (strain Pm70).